The chain runs to 602 residues: Arginine--tRNA ligase (602 aa).

The short motif at 124–134 (ANPTGPVHVGR) is the 'HIGH' region element.

This sequence belongs to the class-I aminoacyl-tRNA synthetase family.

Its subcellular location is the cytoplasm. It carries out the reaction tRNA(Arg) + L-arginine + ATP = L-arginyl-tRNA(Arg) + AMP + diphosphate. The protein is Arginine--tRNA ligase of Halorubrum lacusprofundi (strain ATCC 49239 / DSM 5036 / JCM 8891 / ACAM 34).